Reading from the N-terminus, the 442-residue chain is Hydroxycinnamoyltransferase 2 (442 aa).

Catalysis depends on proton acceptor residues H159 and D389.

It belongs to the plant acyltransferase family. Expressed in roots and leaves. Expressed at low levels in stems and seeds.

Hydroxycinnamoyl transferase that catalyzes the transfer of an acyl from p-coumaryol-CoA to various acyl acceptors. Can use feruloyl-CoA and caffeoyl-CoA as acyl donors. This is Hydroxycinnamoyltransferase 2 from Oryza sativa subsp. japonica (Rice).